A 690-amino-acid polypeptide reads, in one-letter code: Elongation factor G (690 aa).

Residues 8 to 283 enclose the tr-type G domain; sequence SRCRNIGIMA…AVVDFLPSPS (276 aa). GTP contacts are provided by residues 17–24, 81–85, and 135–138; these read AHIDAGKT, DTPGH, and NKMD.

It belongs to the TRAFAC class translation factor GTPase superfamily. Classic translation factor GTPase family. EF-G/EF-2 subfamily.

It is found in the cytoplasm. Its function is as follows. Catalyzes the GTP-dependent ribosomal translocation step during translation elongation. During this step, the ribosome changes from the pre-translocational (PRE) to the post-translocational (POST) state as the newly formed A-site-bound peptidyl-tRNA and P-site-bound deacylated tRNA move to the P and E sites, respectively. Catalyzes the coordinated movement of the two tRNA molecules, the mRNA and conformational changes in the ribosome. This is Elongation factor G from Anaplasma marginale (strain St. Maries).